The sequence spans 253 residues: Phosphoadenosine 5'-phosphosulfate reductase (253 aa).

The Nucleophile; cysteine thiosulfonate intermediate role is filled by cysteine 239.

The protein belongs to the PAPS reductase family. CysH subfamily.

Its subcellular location is the cytoplasm. The enzyme catalyses [thioredoxin]-disulfide + sulfite + adenosine 3',5'-bisphosphate + 2 H(+) = [thioredoxin]-dithiol + 3'-phosphoadenylyl sulfate. It functions in the pathway sulfur metabolism; hydrogen sulfide biosynthesis; sulfite from sulfate: step 3/3. In terms of biological role, catalyzes the formation of sulfite from phosphoadenosine 5'-phosphosulfate (PAPS) using thioredoxin as an electron donor. The polypeptide is Phosphoadenosine 5'-phosphosulfate reductase (Photobacterium profundum (strain SS9)).